Reading from the N-terminus, the 131-residue chain is Profilin-5 (131 aa).

Cysteine 13 and cysteine 115 form a disulfide bridge. Residues 81–97 (VVIRGKKGTGGITIKKT) carry the Involved in PIP2 interaction motif. Threonine 111 carries the phosphothreonine modification.

It belongs to the profilin family. In terms of assembly, multimer. Occurs in many kinds of cells as a complex with monomeric actin in a 1:1 ratio. In terms of processing, phosphorylated by MAP kinases. Expressed in vegetative tissues. Present in shoots, roots and coleoptiles. Also detected in endosperm and pollen.

The protein localises to the cytoplasm. It localises to the cytoskeleton. Actin binding is enhanced by calcium Ca(2+). In terms of biological role, binds to actin and affects the structure of the cytoskeleton. At high concentrations, profilin prevents the polymerization of actin, whereas it enhances it at low concentrations. By binding to PIP2, it inhibits the formation of IP3 and DG. Has a high affinity for poly-proline. The protein is Profilin-5 of Zea mays (Maize).